A 75-amino-acid chain; its full sequence is Large ribosomal subunit protein bL31 (75 aa).

Belongs to the bacterial ribosomal protein bL31 family. Type A subfamily. Part of the 50S ribosomal subunit.

Its function is as follows. Binds the 23S rRNA. This Acidiphilium cryptum (strain JF-5) protein is Large ribosomal subunit protein bL31.